Here is a 718-residue protein sequence, read N- to C-terminus: Polyribonucleotide nucleotidyltransferase (718 aa).

The Mg(2+) site is built by Asp-496 and Asp-502. Residues 563 to 622 (PRLLTIKIDSDMIGLVIGPGGKTIKGITEETGAKIDIEDDGTVTISAVDENKAKRARNII) form the KH domain. The region spanning 632–700 (GDVYAGRITR…NKGRINLTRL (69 aa)) is the S1 motif domain.

This sequence belongs to the polyribonucleotide nucleotidyltransferase family. The cofactor is Mg(2+).

The protein localises to the cytoplasm. It catalyses the reaction RNA(n+1) + phosphate = RNA(n) + a ribonucleoside 5'-diphosphate. Functionally, involved in mRNA degradation. Catalyzes the phosphorolysis of single-stranded polyribonucleotides processively in the 3'- to 5'-direction. This chain is Polyribonucleotide nucleotidyltransferase, found in Nostoc punctiforme (strain ATCC 29133 / PCC 73102).